The chain runs to 636 residues: NADP-dependent malic enzyme, chloroplastic (636 aa).

The segment at 1–28 is disordered; sequence MLSTRTAAVAASASPASPWKLGGRSEGG. The transit peptide at 1-62 directs the protein to the chloroplast; sequence MLSTRTAAVA…LPPRRVDAVA (62 aa). The segment covering 7 to 18 has biased composition (low complexity); it reads AAVAASASPASP. Tyrosine 184 functions as the Proton donor in the catalytic mechanism. Arginine 237 contributes to the NAD(+) binding site. Lysine 255 (proton acceptor) is an active-site residue. A divalent metal cation is bound by residues glutamate 327, aspartate 328, and aspartate 351. Aspartate 351 provides a ligand contact to NAD(+). 380–396 lines the NADP(+) pocket; the sequence is LFLGAGEAGTGIAELIA. Asparagine 492 is an NAD(+) binding site.

The protein belongs to the malic enzymes family. Homotetramer. Requires Mg(2+) as cofactor. The cofactor is Mn(2+).

It is found in the plastid. It localises to the chloroplast. It carries out the reaction (S)-malate + NADP(+) = pyruvate + CO2 + NADPH. It catalyses the reaction oxaloacetate + H(+) = pyruvate + CO2. Its pathway is photosynthesis; C4 acid pathway. The chloroplastic ME isoform decarboxylates malate shuttled from neighboring mesophyll cells. The CO(2) released is then refixed by ribulose-bisphosphate carboxylase. This pathway eliminates the photorespiratory loss of CO(2) that occurs in most plants. This chain is NADP-dependent malic enzyme, chloroplastic (MOD1), found in Zea mays (Maize).